The sequence spans 122 residues: Histone H2B (122 aa).

The tract at residues 1-31 (MPPKPSGKGQKKAGKAKGAPSTNKKRKRKRK) is disordered. Position 2 is a n,N-dimethylproline (P2). An Isoglutamyl lysine isopeptide (Gln-Lys) (interchain with K-5 in histone H4) cross-link involves residue Q10. O-linked (GlcNAc) serine glycosylation occurs at S109. K117 is covalently cross-linked (Glycyl lysine isopeptide (Lys-Gly) (interchain with G-Cter in ubiquitin)).

Belongs to the histone H2B family. The nucleosome is a histone octamer containing two molecules each of H2A, H2B, H3 and H4 assembled in one H3-H4 heterotetramer and two H2A-H2B heterodimers. The octamer wraps approximately 147 bp of DNA. In terms of processing, monoubiquitination of Lys-117 gives a specific tag for epigenetic transcriptional activation and is also prerequisite for histone H3 'Lys-4' and 'Lys-79' methylation. GlcNAcylation at Ser-109 promotes monoubiquitination of Lys-117. It fluctuates in response to extracellular glucose, and associates with transcribed genes.

Its subcellular location is the nucleus. The protein localises to the chromosome. Functionally, core component of nucleosome. Nucleosomes wrap and compact DNA into chromatin, limiting DNA accessibility to the cellular machineries which require DNA as a template. Histones thereby play a central role in transcription regulation, DNA repair, DNA replication and chromosomal stability. DNA accessibility is regulated via a complex set of post-translational modifications of histones, also called histone code, and nucleosome remodeling. The chain is Histone H2B from Patiria pectinifera (Starfish).